We begin with the raw amino-acid sequence, 504 residues long: DnaJ homolog subfamily C member 3 (504 aa).

The signal sequence occupies residues 1 to 31 (MVAPGSVTSRLGSVFPFLLVLVDLQYEGAEC). TPR repeat units lie at residues 37 to 70 (VEKH…DPDN), 72 to 104 (IAYY…KMDF), 105 to 138 (TAAR…NPSE), 154 to 187 (MQRL…CVWD), 189 to 221 (ELRE…KNDN), 222 to 255 (TEAF…DQDH), 268 to 301 (LNKL…EPSI), 306 to 339 (VRSK…EPDN), and 340 to 373 (VNAL…NEND). Cys248 and Cys258 are joined by a disulfide. Ser274 carries the phosphoserine; by FAM20C modification. The cysteines at positions 313 and 329 are disulfide-linked. A flexible linker region spans residues 375–393 (QIREGLEKAQRLLKQSQKR). Positions 394 to 462 (DYYKILGVKR…EMRKKFDDGE (69 aa)) constitute a J domain. The tract at residues 451–481 (DPEMRKKFDDGEDPLDAESQQGGGGNPFHRS) is disordered.

Interacts with EIF2AK4/GCN2; this interaction occurs under endoplasmic reticulum (ER) stress, hypothermic and amino acid starving stress conditions and inhibits EIF2AK4/GCN2 kinase activity. Interacts with EIF2AK3. Interacts with EIF2AK2. Forms a trimeric complex with DNAJB1 and HSPA8. Interacts with THAP12. In terms of tissue distribution, widely expressed with high level in the pancreas and testis. Also expressed in cell lines with different levels.

The protein resides in the endoplasmic reticulum. In terms of biological role, involved in the unfolded protein response (UPR) during endoplasmic reticulum (ER) stress. Acts as a negative regulator of the EIF2AK4/GCN2 kinase activity by preventing the phosphorylation of eIF-2-alpha at 'Ser-52' and hence attenuating general protein synthesis under ER stress, hypothermic and amino acid starving stress conditions. Co-chaperone of HSPA8/HSC70, it stimulates its ATPase activity. May inhibit both the autophosphorylation of EIF2AK2/PKR and the ability of EIF2AK2 to catalyze phosphorylation of the EIF2A. May inhibit EIF2AK3/PERK activity. The sequence is that of DnaJ homolog subfamily C member 3 (DNAJC3) from Homo sapiens (Human).